A 180-amino-acid polypeptide reads, in one-letter code: Cell division protein SepF (180 aa).

Positions L21–H40 are disordered. The span at D27–H40 shows a compositional bias: basic and acidic residues.

The protein belongs to the SepF family. Homodimer. Interacts with FtsZ.

The protein localises to the cytoplasm. Cell division protein that is part of the divisome complex and is recruited early to the Z-ring. Probably stimulates Z-ring formation, perhaps through the cross-linking of FtsZ protofilaments. Its function overlaps with FtsA. The chain is Cell division protein SepF from Frankia casuarinae (strain DSM 45818 / CECT 9043 / HFP020203 / CcI3).